The chain runs to 169 residues: Peptide methionine sulfoxide reductase MsrA (169 aa).

Residue C10 is part of the active site.

This sequence belongs to the MsrA Met sulfoxide reductase family.

It carries out the reaction L-methionyl-[protein] + [thioredoxin]-disulfide + H2O = L-methionyl-(S)-S-oxide-[protein] + [thioredoxin]-dithiol. The enzyme catalyses [thioredoxin]-disulfide + L-methionine + H2O = L-methionine (S)-S-oxide + [thioredoxin]-dithiol. Its function is as follows. Has an important function as a repair enzyme for proteins that have been inactivated by oxidation. Catalyzes the reversible oxidation-reduction of methionine sulfoxide in proteins to methionine. The sequence is that of Peptide methionine sulfoxide reductase MsrA from Streptococcus agalactiae serotype Ia (strain ATCC 27591 / A909 / CDC SS700).